The sequence spans 174 residues: RxLR effector protein 207 (174 aa).

Residues 1-20 (MSKVFLLLVLSVFALVSCDA) form the signal peptide. Positions 46 to 62 (RMLRAQEEPTNAADEER) match the RxLR-dEER motif. Positions 82-99 (VTNSKLVQSMNNKLASLT) are disordered.

It belongs to the RxLR effector family. As to quaternary structure, interacts with Nicotiana benthamiana ACD11, BPA1 (binding partner of ACD11), as well as BPA-like proteins BPL1, BPL2, BPL3 and BPL4.

It localises to the secreted. Its subcellular location is the host cell membrane. In terms of biological role, secreted effector that activates ROS-mediated cell death in plant host and is essential for virulence. Plays a role in the transition from the biotrophic to necrotrophic stage. Associates with and promotes the degradation of Nicotiana benthamiana BPA1, BPL1, BPL2, and BPL4 to disrupt ACD11 stabilization in a 26S proteasome-dependent manner. The polypeptide is RxLR effector protein 207 (Phytophthora capsici).